Consider the following 861-residue polypeptide: Importin subunit beta-1 (861 aa).

Serine 2 is subject to N-acetylserine. HEAT repeat units follow at residues 3 to 35 (TAEF…LSND), 37 to 66 (FLQF…LTLK), 90 to 129 (PEAK…ELPH), 134 to 164 (ELMK…YMCE), 177 to 208 (SNNI…LADS), 219 to 255 (EGER…MSLY), 260 to 306 (KPYM…ELAQ), 317 to 362 (FALS…AQNC), 367 to 395 (LEPV…AFGS), 402 to 442 (KVQR…ADSV), 452 to 484 (LPGV…VEQL), 496 to 530 (YPAL…MVEY), 536 to 586 (AETS…VIRK), 592 to 629 (EPVA…AASL), 634 to 669 (EKYL…ISNS), 675 to 713 (RRYS…ASNI), 718 to 764 (IPYL…IVAG), 773 to 812 (FPYV…IAAM), and 819 to 859 (KQFY…KRQL). An Importin N-terminal domain is found at 25–106 (SETQLKKLSN…KTNALTALVS (82 aa)). Serine 836 is subject to Phosphoserine.

The protein belongs to the importin beta family. Importin beta-1 subfamily. As to quaternary structure, forms a complex with the importin alpha subunit (SRP1/KAP60). Interacts with Ran (GSP1); interacts specifically with the GTP-bound form of Ran (GTP-Ran), protecting it from GTP hydrolysis and nucleotide exchange. Interacts with nucleoporin NUP1.

It localises to the cytoplasm. Its subcellular location is the nucleus. It is found in the nuclear pore complex. Its function is as follows. Importin beta subunit that functions in nuclear protein import through association with the importin alpha subunit, which binds to the classical nuclear localization signal (cNLS) in cargo substrates. Docking of the importin/substrate complex to the nuclear pore complex (NPC) is mediated by importin beta through binding to nucleoporin FxFG repeats and the complex is subsequently translocated through the pore by an energy requiring, Ran-dependent mechanism. At the nucleoplasmic side of the NPC, GTP-Ran binds to importin beta and the three components separate, leading to release of the cargo. Importin alpha and beta are re-exported from the nucleus to the cytoplasm where GTP hydrolysis releases Ran from importin beta. The directionality of nuclear import is thought to be conferred by an asymmetric distribution of the GTP- and GDP-bound forms of Ran between the cytoplasm and nucleus. Mediates the nuclear import of histones H2A and H2B. Mediates the nuclear import of transcription factor GCN4. This chain is Importin subunit beta-1, found in Saccharomyces cerevisiae (strain ATCC 204508 / S288c) (Baker's yeast).